A 346-amino-acid chain; its full sequence is uncharacterized protein (346 aa).

Positions 1-27 are cleaved as a signal peptide; that stretch reads MKFNKISLSVSTALLAAGLAVSGSANA.

This is an uncharacterized protein from Haemophilus influenzae (strain ATCC 51907 / DSM 11121 / KW20 / Rd).